The primary structure comprises 358 residues: MAQAAVERRVFRLSVDEETVVAAGVGALSEAPRAAGGTAYIVHEEALSAEAARLARILEARGVEVLGAVAGGGERVKSLDWVTRLWDLMLQAGVERSTTVYIIGGGALLDAAGFAASTLMRGLSTVNIPSTTLAAFDAAAGGKTGVNLRGKNMVGTFHNPRMVLVEPGIVAGQPDEGYRDGFAELVKHVALSGDREPAASLLPQALARRPAPLARLAFWSLGYKMQVVAGDPRERGLRRILNLGHTIGHALEAASSYTLSHGRSVSIGLAGELELSRRLAGLPRGEAEDVLDMLSTAGLPLEPPPGLAGEAAGLVGLDKKREGGSIVMPLLERLGRPRLSRVPVETVSRLMVELWGGG.

NAD(+) is bound by residues 72–77, 106–110, 130–131, K143, and K151; these read GGERVK, GALLD, and ST. Positions 184, 245, and 261 each coordinate Zn(2+).

The protein belongs to the sugar phosphate cyclases superfamily. Dehydroquinate synthase family. NAD(+) serves as cofactor. Co(2+) is required as a cofactor. The cofactor is Zn(2+).

The protein resides in the cytoplasm. It catalyses the reaction 7-phospho-2-dehydro-3-deoxy-D-arabino-heptonate = 3-dehydroquinate + phosphate. The protein operates within metabolic intermediate biosynthesis; chorismate biosynthesis; chorismate from D-erythrose 4-phosphate and phosphoenolpyruvate: step 2/7. Catalyzes the conversion of 3-deoxy-D-arabino-heptulosonate 7-phosphate (DAHP) to dehydroquinate (DHQ). In Aeropyrum pernix (strain ATCC 700893 / DSM 11879 / JCM 9820 / NBRC 100138 / K1), this protein is 3-dehydroquinate synthase (aroB).